A 401-amino-acid chain; its full sequence is Enoyl-[acyl-carrier-protein] reductase [NADH] 1 (401 aa).

NAD(+) contacts are provided by residues 48-53 (GSSSGY), 74-75 (FE), 111-112 (DA), and 139-140 (LA). Tyrosine 225 is a binding site for substrate. The active-site Proton donor is the tyrosine 235. NAD(+)-binding positions include lysine 244 and 273–275 (VVT).

It belongs to the TER reductase family. In terms of assembly, monomer.

The catalysed reaction is a 2,3-saturated acyl-[ACP] + NAD(+) = a (2E)-enoyl-[ACP] + NADH + H(+). It catalyses the reaction a 2,3-saturated acyl-CoA + NAD(+) = a (2E)-enoyl-CoA + NADH + H(+). It carries out the reaction (2E)-butenoyl-[ACP] + NADH + H(+) = butanoyl-[ACP] + NAD(+). The enzyme catalyses butanoyl-CoA + NAD(+) = (2E)-butenoyl-CoA + NADH + H(+). Its pathway is lipid metabolism; fatty acid biosynthesis. Weakly inhibited by triclosan. Involved in the final reduction of the elongation cycle of fatty acid synthesis (FAS II). Catalyzes the NADH-dependent reduction of a carbon-carbon double bond in an enoyl moiety that is covalently linked to an acyl carrier protein (ACP). It can use both crotonyl-CoA and crotonyl-ACP. The sequence is that of Enoyl-[acyl-carrier-protein] reductase [NADH] 1 from Vibrio cholerae serotype O1 (strain ATCC 39315 / El Tor Inaba N16961).